A 188-amino-acid chain; its full sequence is Peptidyl-tRNA hydrolase (188 aa).

Phe15 is a tRNA binding site. The active-site Proton acceptor is the His20. The tRNA site is built by Tyr64, Asn66, and Asn112.

The protein belongs to the PTH family. As to quaternary structure, monomer.

The protein localises to the cytoplasm. It catalyses the reaction an N-acyl-L-alpha-aminoacyl-tRNA + H2O = an N-acyl-L-amino acid + a tRNA + H(+). In terms of biological role, hydrolyzes ribosome-free peptidyl-tRNAs (with 1 or more amino acids incorporated), which drop off the ribosome during protein synthesis, or as a result of ribosome stalling. Its function is as follows. Catalyzes the release of premature peptidyl moieties from peptidyl-tRNA molecules trapped in stalled 50S ribosomal subunits, and thus maintains levels of free tRNAs and 50S ribosomes. This chain is Peptidyl-tRNA hydrolase, found in Borreliella afzelii (strain PKo) (Borrelia afzelii).